The primary structure comprises 426 residues: Protein EARLY STARVATION 1, chloroplastic (426 aa).

The transit peptide at 1-58 (MSEMAASSAISLLDIKLRRFGVGASNHELRLTKWFKGDQAGAPTRRFTCFADMLAPIR) directs the protein to the chloroplast. Disordered stretches follow at residues 106 to 127 (CTPR…TGIA) and 396 to 426 (QPRE…DQPQ). The span at 118 to 127 (TPPKRDTGIA) shows a compositional bias: basic and acidic residues. Residues 412–426 (PSPPPEPDLPPDQPQ) are compositionally biased toward pro residues.

It belongs to the ESV1 family.

It localises to the plastid. The protein localises to the chloroplast stroma. Its subcellular location is the plastid stroma. Functionally, binds preferentially to highly ordered alpha-glucans, such as starch and crystalline maltodextrins. Involved in the organization of the starch granule matrix, thus influencing starch turnover by modulating the accessibility of starch polymers to modifying and degrading enzymes involved in phosphorylation, hydrolyzes and synthesis, including starch synthases (SSI and SSIII), starch phosphorylases (PHS1), isoamylase, beta-amylase, glucan water dikinase (GWD) and phosphoglucan water dikinase (PWD). Prevents GWD- and PWD-mediated starch phosphorylation, and subsequent degradation. Required for the control of starch degradation in leaves and starch distribution in nonphotosynthetic parts (e.g. cells immediately adjacent to veins, columella cells of root caps, stems, flowers and siliques) by limiting the hasty depletion of starch reserves during the night. Promotes gravitropic responses, negative in shoots but positive in roots, by maintaining starch granules (statoliths) accumulation in hypocotyls and roots columella, especially in dark conditions and in the endodermis, where starch is formed from transported glucose-6-phosphates. This is Protein EARLY STARVATION 1, chloroplastic from Arabidopsis thaliana (Mouse-ear cress).